Here is a 227-residue protein sequence, read N- to C-terminus: Cytochrome c oxidase subunit 2 (227 aa).

Residues 1 to 14 lie on the Mitochondrial intermembrane side of the membrane; the sequence is MAYPLQMGLQDATS. The helical transmembrane segment at 15 to 45 threads the bilayer; it reads PIMEELLHFHDHTLMIVFLISSLVLYIISLM. Residues 46 to 59 are Mitochondrial matrix-facing; it reads LTTKLTHTSTMDAQ. Residues 60–87 traverse the membrane as a helical segment; it reads EVETVWTILPAIILILIALPSLRILYMM. The Mitochondrial intermembrane portion of the chain corresponds to 88–227; sequence DEINNPSLTV…HFEKWSTSML (140 aa). Cu cation contacts are provided by His-161, Cys-196, Glu-198, Cys-200, His-204, and Met-207. Glu-198 is a binding site for Mg(2+).

The protein belongs to the cytochrome c oxidase subunit 2 family. As to quaternary structure, component of the cytochrome c oxidase (complex IV, CIV), a multisubunit enzyme composed of 14 subunits. The complex is composed of a catalytic core of 3 subunits MT-CO1, MT-CO2 and MT-CO3, encoded in the mitochondrial DNA, and 11 supernumerary subunits COX4I, COX5A, COX5B, COX6A, COX6B, COX6C, COX7A, COX7B, COX7C, COX8 and NDUFA4, which are encoded in the nuclear genome. The complex exists as a monomer or a dimer and forms supercomplexes (SCs) in the inner mitochondrial membrane with NADH-ubiquinone oxidoreductase (complex I, CI) and ubiquinol-cytochrome c oxidoreductase (cytochrome b-c1 complex, complex III, CIII), resulting in different assemblies (supercomplex SCI(1)III(2)IV(1) and megacomplex MCI(2)III(2)IV(2)). Found in a complex with TMEM177, COA6, COX18, COX20, SCO1 and SCO2. Interacts with TMEM177 in a COX20-dependent manner. Interacts with COX20. Interacts with COX16. Cu cation serves as cofactor.

Its subcellular location is the mitochondrion inner membrane. It carries out the reaction 4 Fe(II)-[cytochrome c] + O2 + 8 H(+)(in) = 4 Fe(III)-[cytochrome c] + 2 H2O + 4 H(+)(out). Component of the cytochrome c oxidase, the last enzyme in the mitochondrial electron transport chain which drives oxidative phosphorylation. The respiratory chain contains 3 multisubunit complexes succinate dehydrogenase (complex II, CII), ubiquinol-cytochrome c oxidoreductase (cytochrome b-c1 complex, complex III, CIII) and cytochrome c oxidase (complex IV, CIV), that cooperate to transfer electrons derived from NADH and succinate to molecular oxygen, creating an electrochemical gradient over the inner membrane that drives transmembrane transport and the ATP synthase. Cytochrome c oxidase is the component of the respiratory chain that catalyzes the reduction of oxygen to water. Electrons originating from reduced cytochrome c in the intermembrane space (IMS) are transferred via the dinuclear copper A center (CU(A)) of subunit 2 and heme A of subunit 1 to the active site in subunit 1, a binuclear center (BNC) formed by heme A3 and copper B (CU(B)). The BNC reduces molecular oxygen to 2 water molecules using 4 electrons from cytochrome c in the IMS and 4 protons from the mitochondrial matrix. The polypeptide is Cytochrome c oxidase subunit 2 (MT-CO2) (Halichoerus grypus (Gray seal)).